We begin with the raw amino-acid sequence, 972 residues long: 116 kDa U5 small nuclear ribonucleoprotein component (972 aa).

Residues 1–53 (MDTDLYDEFGNYIGPELDSDDEDDELGRESKELDELEDDDDDDDMGDHDEDHP) are disordered. Composition is skewed to acidic residues over residues 17 to 26 (LDSDDEDDEL) and 34 to 48 (DELE…MGDH). One can recognise a tr-type G domain in the interval 127 to 409 (ELIRNVTLCG…GIHLTKEELK (283 aa)). GTP contacts are provided by residues 136–143 (GHLHHGKT), 204–208 (DTPGH), and 258–261 (NKID).

The protein belongs to the TRAFAC class translation factor GTPase superfamily. Classic translation factor GTPase family. EF-G/EF-2 subfamily. Component of the U5 snRNP and the U4/U6-U5 tri-snRNP complex, a building block of the spliceosome. Component of the pre-catalytic, catalytic and post-catalytic spliceosome complexes. Component of the minor spliceosome, which splices U12-type introns.

It is found in the nucleus. Its function is as follows. Required for pre-mRNA splicing as component of the spliceosome, including pre-catalytic, catalytic and post-catalytic spliceosomal complexes. Component of the U5 snRNP and the U4/U6-U5 tri-snRNP complex, a building block of the spliceosome. As a component of the minor spliceosome, involved in the splicing of U12-type introns in pre-mRNAs. The protein is 116 kDa U5 small nuclear ribonucleoprotein component (EFTUD2) of Gallus gallus (Chicken).